Here is a 185-residue protein sequence, read N- to C-terminus: uncharacterized protein (185 aa).

5 helical membrane-spanning segments follow: residues 4–24 (IAWM…LGLA), 35–55 (GLLF…ATGV), 60–80 (GASA…SIAY), 123–143 (VLAY…INDS), and 152–172 (ILKL…SYFI).

It is found in the cell membrane. This is an uncharacterized protein from Bacillus subtilis (strain 168).